The sequence spans 233 residues: Phosphoglycolate phosphatase 2 (233 aa).

Asp-13 functions as the Nucleophile in the catalytic mechanism. Asp-13 and Asp-15 together coordinate Mg(2+). Position 152 (Lys-152) interacts with substrate. Mg(2+) is bound by residues Asp-174 and Asp-178.

The protein belongs to the archaeal SPP-like hydrolase family. The cofactor is Mg(2+).

It carries out the reaction 2-phosphoglycolate + H2O = glycolate + phosphate. Its function is as follows. Catalyzes the dephosphorylation of 2-phosphoglycolate. This is Phosphoglycolate phosphatase 2 from Saccharolobus solfataricus (strain ATCC 35092 / DSM 1617 / JCM 11322 / P2) (Sulfolobus solfataricus).